An 860-amino-acid polypeptide reads, in one-letter code: Transforming growth factor-beta receptor-associated protein 1 (860 aa).

The 274-residue stretch at 24 to 297 folds into the CNH domain; sequence RVNIECVECC…HILQDFEGRV (274 aa). One copy of the CHCR repeat lies at 564–728; sequence RPLDEQQKNS…LLAIYLHAGP (165 aa).

The protein belongs to the TRAP1 family. As to quaternary structure, interacts with TGFBR2 and ACVR2B; in the absence of ligand stimulation. Interacts with TGFBR1, ACVRL1, BMPR1A and ACVR1B; in the absence of ligand stimulation and to a less extent. Interacts with SMAD4; the interaction seems to be mutually exclusive with the interaction of SMAD4 and phosphorylated SMAD2. May interact with ALOX5. Interacts with RAB5C. Interacts with VPS8, VPS11 and VPS16. Component of the putative class C core vacuole/endosome tethering (CORVET) complex; the core of which composed of the class C Vps proteins VPS11, VPS16, VPS18 and VPS33A, is associated with VPS8 and TGFBRAP1.

The protein localises to the cytoplasm. It is found in the early endosome. Plays a role in the TGF-beta/activin signaling pathway. It associates with inactive heteromeric TGF-beta and activin receptor complexes, mainly through the type II receptor, and is released upon activation of signaling. May recruit SMAD4 to the vicinity of the receptor complex and facilitate its interaction with receptor-regulated Smads, such as SMAD2. Functionally, plays a role in vesicle-mediated protein trafficking of the endocytic membrane transport pathway. Believed to act as a component of the putative CORVET endosomal tethering complexes which is proposed to be involved in the Rab5-to-Rab7 endosome conversion probably implicating MON1A/B, and via binding SNAREs and SNARE complexes to mediate tethering and docking events during SNARE-mediated membrane fusion. The CORVET complex is proposed to function as a Rab5 effector to mediate early endosome fusion probably in specific endosome subpopulations. Functions predominantly in APPL1-containing endosomes and in degradative but not recycling trafficking of endocytosed cargo. This Homo sapiens (Human) protein is Transforming growth factor-beta receptor-associated protein 1 (TGFBRAP1).